The chain runs to 1210 residues: Epidermal growth factor receptor (1210 aa).

An N-terminal signal peptide occupies residues 1–24; it reads MRPSGTARTTLLVLLTALCAAGGA. Over 25-647 the chain is Extracellular; that stretch reads LEEKKVCQGT…VWPSGPKIPS (623 aa). Cys-31 and Cys-58 are joined by a disulfide. The stretch at 75 to 300 is one Approximate repeat; it reads DLSFLKTIQE…CVKKCPRNYV (226 aa). N-linked (GlcNAc...) asparagine glycans are attached at residues Asn-128, Asn-175, and Asn-196. Intrachain disulfides connect Cys-157–Cys-187, Cys-190–Cys-199, Cys-194–Cys-207, Cys-215–Cys-223, Cys-219–Cys-231, Cys-232–Cys-240, Cys-236–Cys-248, Cys-251–Cys-260, Cys-264–Cys-291, Cys-295–Cys-307, Cys-311–Cys-326, Cys-329–Cys-333, and Cys-337–Cys-362. Phosphoserine is present on Ser-229. 3 N-linked (GlcNAc...) asparagine glycosylation sites follow: Asn-352, Asn-413, and Asn-444. Residues 390–600 form an Approximate repeat; that stretch reads RELEILKTVK…CVKTCPAGIM (211 aa). 11 cysteine pairs are disulfide-bonded: Cys-470-Cys-499, Cys-506-Cys-515, Cys-510-Cys-523, Cys-526-Cys-535, Cys-539-Cys-555, Cys-558-Cys-571, Cys-562-Cys-579, Cys-582-Cys-591, Cys-595-Cys-617, Cys-620-Cys-628, and Cys-624-Cys-636. N-linked (GlcNAc...) asparagine glycosylation occurs at Asn-528. N-linked (GlcNAc...) asparagine glycosylation occurs at Asn-568. N-linked (GlcNAc...) asparagine glycans are attached at residues Asn-603 and Asn-623. A helical transmembrane segment spans residues 648–670; the sequence is IATGIVGGLLFIVVVALGIGLFM. Topologically, residues 671-1210 are cytoplasmic; sequence RRRHIVRKRT…APPSSEFIGA (540 aa). Residue Thr-680 is modified to Phosphothreonine; by PKC and PKD/PRKD1. The important for dimerization, phosphorylation and activation stretch occupies residues 690–706; it reads LVEPLTPSGEAPNQAHL. At Thr-695 the chain carries Phosphothreonine; by PKD/PRKD1. At Ser-697 the chain carries Phosphoserine. The 268-residue stretch at 714–981 folds into the Protein kinase domain; sequence FKKIKVLGSG…KMARDPQRYL (268 aa). Residue Lys-718 forms a Glycyl lysine isopeptide (Lys-Gly) (interchain with G-Cter in ubiquitin) linkage. 720 to 728 serves as a coordination point for ATP; it reads LGSGAFGTV. Lys-739 participates in a covalent cross-link: Glycyl lysine isopeptide (Lys-Gly) (interchain with G-Cter in ubiquitin). Residue Lys-747 coordinates ATP. Lys-747 carries the post-translational modification N6-(2-hydroxyisobutyryl)lysine. Glycyl lysine isopeptide (Lys-Gly) (interchain with G-Cter in ubiquitin) cross-links involve residues Lys-756 and Lys-759. ATP is bound at residue 792–793; the sequence is TQ. The active-site Proton acceptor is the Asp-839. ATP is bound at residue Asp-857. Lys-869 participates in a covalent cross-link: Glycyl lysine isopeptide (Lys-Gly) (interchain with G-Cter in ubiquitin). Position 871 is a phosphotyrosine (Tyr-871). Glycyl lysine isopeptide (Lys-Gly) (interchain with G-Cter in ubiquitin) cross-links involve residues Lys-931, Lys-962, and Lys-972. Residues Ser-993 and Ser-997 each carry the phosphoserine modification. Phosphotyrosine; by autocatalysis occurs at positions 1000 and 1018. Phosphoserine occurs at positions 1028 and 1041. Thr-1043 carries the post-translational modification Phosphothreonine. Ser-1044 bears the Phosphoserine mark. Cys-1051 carries the S-palmitoyl cysteine lipid modification. Residue Tyr-1069 is modified to Phosphotyrosine. Phosphoserine occurs at positions 1070 and 1071. 2 positions are modified to phosphotyrosine; by autocatalysis: Tyr-1092 and Tyr-1110. A disordered region spans residues 1113–1137; sequence QPLHPAPGRDLHYQNPHSNAVGNPE. Positions 1127–1137 are enriched in polar residues; sequence NPHSNAVGNPE. Cys-1146 carries the S-palmitoyl cysteine lipid modification. Ser-1166 bears the Phosphoserine mark. Tyr-1172 is modified (phosphotyrosine; by autocatalysis). Tyr-1197 carries the phosphotyrosine modification. Arg-1199 bears the Omega-N-methylarginine mark.

It belongs to the protein kinase superfamily. Tyr protein kinase family. EGF receptor subfamily. As to quaternary structure, binding of the ligand triggers homo- and/or heterodimerization of the receptor triggering its autophosphorylation. Heterodimer with ERBB2. Forms a complex with CCDC88A/GIV (via SH2-like region) and GNAI3 which leads to enhanced EGFR signaling and triggering of cell migration; binding of CCDC88A requires autophosphorylation of the EGFR C-terminal region, and ligand stimulation is required for recruitment of GNAI3 to the complex. Interacts with ERRFI1; inhibits dimerization of the kinase domain and autophosphorylation. Part of a complex with ERBB2 and either PIK3C2A or PIK3C2B. Interacts with GRB2; an adapter protein coupling the receptor to downstream signaling pathways. Interacts with GAB2; involved in signaling downstream of EGFR. Interacts with STAT3; mediates EGFR downstream signaling in cell proliferation. Interacts with RIPK1; involved in NF-kappa-B activation. Interacts (autophosphorylated) with CBL, CBLB and CBLC; involved in EGFR ubiquitination and regulation; interaction with CBL is reduced in the presence of tensin TNS4. Interacts with SOCS5; regulates EGFR degradation through ELOC- and ELOB-mediated ubiquitination and proteasomal degradation. Interacts with PRMT5; methylates EGFR and enhances interaction with PTPN6. Interacts (phosphorylated) with PTPN6; inhibits EGFR-dependent activation of MAPK/ERK. Interacts with COPG1; essential for regulation of EGF-dependent nuclear transport of EGFR by retrograde trafficking from the Golgi to the ER. Interacts with TNK2; this interaction is dependent on EGF stimulation and kinase activity of EGFR. Interacts with PCNA; positively regulates PCNA. Interacts with PELP1. Interacts with MUC1. Interacts with AP2M1. Interacts with FER. Interacts (via SH2 domains) with GRB2, NCK1 and NCK2. Interacts with EPS8; mediates EPS8 phosphorylation. Interacts with ATXN2. Interacts with GAREM1. Interacts (ubiquitinated) with ANKRD13A/B/D; the interaction is direct and may regulate EGFR internalization after EGF stimulation. Interacts with GPER1; the interaction occurs in an estrogen-dependent manner. Interacts (via C-terminal cytoplasmic kinase domain) with ZPR1 (via zinc fingers). Interacts with RNF115 and RNF126. Interacts with GPRC5A (via its transmembrane domain). Interacts with FAM83B; positively regulates EGFR inducing its autophosphorylation in absence of stimulation by EGF. Interacts with LAPTM4B; positively correlates with EGFR activation. Interacts with STX19. Interacts with CD44. Interacts with PGRMC1; the interaction requires PGRMC1 homodimerization. Interacts with PIKFYVE. Interacts with NEU3. Interacts with TRAF4. Interacts with the ant venom OMEGA-myrmeciitoxin(02)-Mg1a. Interacts with CD82; this interaction facilitates ligand-induced endocytosis of the receptor and its subsequent desensitization. Post-translationally, monoubiquitinated and polyubiquitinated upon EGF stimulation; which does not affect tyrosine kinase activity or signaling capacity but may play a role in lysosomal targeting. Polyubiquitin linkage is mainly through 'Lys-63', but linkage through 'Lys-48', 'Lys-11' and 'Lys-29' also occurs. Deubiquitinated by OTUD7B, preventing degradation. Ubiquitinated by RNF115 and RNF126. Ubiquitinated by ZNRF1 or CBL at different lysines in response to EGF stimulation; leading to recruitment of the ESCRT machinery and subsequent degradation in the lysosomes. Deubiquitinated by UCHL1 leading to the inhibition of its degradation. In terms of processing, phosphorylated on Tyr residues in response to EGF. Phosphorylation at Ser-697 is partial and occurs only if Thr-695 is phosphorylated. Phosphorylation at Thr-680 and Thr-695 by PRKD1 inhibits EGF-induced MAPK8/JNK1 activation. Dephosphorylation by PTPRJ prevents endocytosis and stabilizes the receptor at the plasma membrane. Autophosphorylation at Tyr-1199 is stimulated by methylation at Arg-1199 and enhances interaction with PTPN6. Autophosphorylation at Tyr-1092 and/or Tyr-1110 recruits STAT3. Dephosphorylated by PTPN1 and PTPN2. Palmitoylated on Cys residues by ZDHHC20. Palmitoylation inhibits internalization after ligand binding, and increases the persistence of tyrosine-phosphorylated EGFR at the cell membrane. Palmitoylation increases the amplitude and duration of EGFR signaling. Post-translationally, methylated. Methylation at Arg-1199 by PRMT5 stimulates phosphorylation at Tyr-1197.

It is found in the cell membrane. The protein localises to the endoplasmic reticulum membrane. It localises to the golgi apparatus membrane. The protein resides in the nucleus membrane. Its subcellular location is the endosome. It is found in the endosome membrane. The protein localises to the nucleus. The catalysed reaction is L-tyrosyl-[protein] + ATP = O-phospho-L-tyrosyl-[protein] + ADP + H(+). Endocytosis and inhibition of the activated EGFR by phosphatases like PTPRJ and PTPRK constitute immediate regulatory mechanisms. Upon EGF-binding phosphorylates EPS15 that regulates EGFR endocytosis and activity. Moreover, inducible feedback inhibitors including LRIG1, SOCS4, SOCS5 and ERRFI1 constitute alternative regulatory mechanisms for the EGFR signaling. Its function is as follows. Receptor tyrosine kinase binding ligands of the EGF family and activating several signaling cascades to convert extracellular cues into appropriate cellular responses. Known ligands include EGF, TGFA/TGF-alpha, AREG, epigen/EPGN, BTC/betacellulin, epiregulin/EREG and HBEGF/heparin-binding EGF. Ligand binding triggers receptor homo- and/or heterodimerization and autophosphorylation on key cytoplasmic residues. The phosphorylated receptor recruits adapter proteins like GRB2 which in turn activates complex downstream signaling cascades. Activates at least 4 major downstream signaling cascades including the RAS-RAF-MEK-ERK, PI3 kinase-AKT, PLCgamma-PKC and STATs modules. May also activate the NF-kappa-B signaling cascade. Also directly phosphorylates other proteins like RGS16, activating its GTPase activity and probably coupling the EGF receptor signaling to the G protein-coupled receptor signaling. Also phosphorylates MUC1 and increases its interaction with SRC and CTNNB1/beta-catenin. Positively regulates cell migration via interaction with CCDC88A/GIV which retains EGFR at the cell membrane following ligand stimulation, promoting EGFR signaling which triggers cell migration. Plays a role in enhancing learning and memory performance. Plays a role in mammalian pain signaling (long-lasting hypersensitivity). The chain is Epidermal growth factor receptor from Mus musculus (Mouse).